The sequence spans 871 residues: DNA mismatch repair protein MutS (871 aa).

Position 620–627 (glycine 620–serine 627) interacts with ATP. The tract at residues histidine 806–leucine 837 is disordered.

The protein belongs to the DNA mismatch repair MutS family.

Functionally, this protein is involved in the repair of mismatches in DNA. It is possible that it carries out the mismatch recognition step. This protein has a weak ATPase activity. In Idiomarina loihiensis (strain ATCC BAA-735 / DSM 15497 / L2-TR), this protein is DNA mismatch repair protein MutS.